The following is a 205-amino-acid chain: Octanoyltransferase (205 aa).

Residues 30–205 enclose the BPL/LPL catalytic domain; that stretch reads NLSDELVWLL…ILKQEFHKIF (176 aa). Substrate-binding positions include 68–75, 140–142, and 153–155; these read RGGKYTYH, AFG, and GIA. Catalysis depends on Cys-171, which acts as the Acyl-thioester intermediate.

The protein belongs to the LipB family.

The protein localises to the cytoplasm. The enzyme catalyses octanoyl-[ACP] + L-lysyl-[protein] = N(6)-octanoyl-L-lysyl-[protein] + holo-[ACP] + H(+). It participates in protein modification; protein lipoylation via endogenous pathway; protein N(6)-(lipoyl)lysine from octanoyl-[acyl-carrier-protein]: step 1/2. Functionally, catalyzes the transfer of endogenously produced octanoic acid from octanoyl-acyl-carrier-protein onto the lipoyl domains of lipoate-dependent enzymes. Lipoyl-ACP can also act as a substrate although octanoyl-ACP is likely to be the physiological substrate. The chain is Octanoyltransferase from Wolbachia pipientis subsp. Culex pipiens (strain wPip).